A 653-amino-acid chain; its full sequence is MSGQPPPPPPQQQPPPPPPPASAAAPATAPPGLAVGPGPAAGVPVPGLAAGSSAAAPFPHGDSALNEQEKELQRRLKRLYPAVDEQETPLPRSWSPKDKFSYIGLSQNNLRVHYKGHGKTPKDAASVRATHPIPAACGIYYFEVKIVSKGRDGYMGIGLSAQGVNMNRLPGWDKHSYGYHGDDGHSFCSSGTGQPYGPTFTTGDVIGCCVNLINNTCFYTKNGHSLGIAFTDLPPNLYPTVGLQTPGEVVDANFGQHPFVFDIEDYMREWRTKIQAQIDRFPIGDREGEWQTMIQKMVSSYLVHHGYCATAEAFARSTDQTVLEELASIKNRQRIQKLVLAGRMGEAIETTQQLYPSLLERNPNLLFTLKVRQFIEMVNGTDSEVRCLGGRSPKSQDSYPVSPRPFSSPSMSPSHGMSIHSLAPGKSSTAHFSGFESCSNGVISNKAHQSYCHSKHQLSSLTVPELNSLNVSRSQQVNNFTSNDVDMETDHYSNGVGETSSNGFLNGSSKHDHEMEDCDTEMEVDCSQLRRQLCGGSQAAIERMIHFGRELQAMSEQLRRECGKNTANKKMLKDAFSLLAYSDPWNSPVGNQLDPIQREPVCSALNSAILETHNLPKQPPLALAMGQATQCLGLMARSGVGSCAFATVEDYLH.

The segment covering 1–21 has biased composition (pro residues); that stretch reads MSGQPPPPPPQQQPPPPPPPA. Residues 1–62 form a disordered region; it reads MSGQPPPPPP…SAAAPFPHGD (62 aa). A compositionally biased stretch (low complexity) spans 22–57; sequence SAAAPATAPPGLAVGPGPAAGVPVPGLAAGSSAAAP. Residues 72 to 259 enclose the B30.2/SPRY domain; the sequence is LQRRLKRLYP…VDANFGQHPF (188 aa). Residues 290–322 form the LisH domain; the sequence is WQTMIQKMVSSYLVHHGYCATAEAFARSTDQTV. The tract at residues 326 to 332 is interaction with CALB1; the sequence is LASIKNR. The CTLH domain maps to 328-385; sequence SIKNRQRIQKLVLAGRMGEAIETTQQLYPSLLERNPNLLFTLKVRQFIEMVNGTDSEV. Position 330 is an N6-acetyllysine (lysine 330). The tract at residues 386 to 422 is disordered; it reads RCLGGRSPKSQDSYPVSPRPFSSPSMSPSHGMSIHSL. The span at 398–421 shows a compositional bias: low complexity; it reads SYPVSPRPFSSPSMSPSHGMSIHS. 2 positions are modified to phosphoserine: serine 402 and serine 412. The interaction with FMR1 stretch occupies residues 539–653; it reads AAIERMIHFG…AFATVEDYLH (115 aa).

Belongs to the RANBP9/10 family. Part of a complex consisting of RANBP9, MKLN1 and GID8. Identified in the CTLH complex that contains GID4, RANBP9 and/or RANBP10, MKLN1, MAEA, RMND5A (or alternatively its paralog RMND5B), GID8, ARMC8, WDR26 and YPEL5. Within this complex, MAEA, RMND5A (or alternatively its paralog RMND5B), GID8, WDR26, and RANBP9 and/or RANBP10 form the catalytic core, while GID4, MKLN1, ARMC8 and YPEL5 have ancillary roles. Interacts with GTP-bound Ran, AR, CDC2L1/p110C, CALB1, S100A7, USP11, SOS1 or SOS2, GID8, and FMR1. Interacts with the Dyrk kinases HIPK2, DYRK1A, and DYRK1B. Interacts with TP73 isoform Alpha but not with TP53. Interacts with the HGF receptor MET and the integrins ITGB1 and ITGB2, but not with ITGAL. Part of a complex consisting of RANBP9, RAN, DYRK1B and COPS5. Directly interacts with RANBP10. Interacts with YPEL5. Interacts with MKLN1. Interacts with DDX4. Interacts with NGFR. Interacts with Tex19.1 and, probably, Tex19.2. In terms of processing, phosphorylated in response to stress. Post-translationally, ubiquitinated. Polyubiquitination targets the protein for rapid degradation via the ubiquitin system. In terms of tissue distribution, ubiquitously expressed, with highest levels in maturating spermatocytes.

It is found in the cytoplasm. The protein resides in the cell membrane. The protein localises to the nucleus. Functionally, may act as scaffolding protein, and as adapter protein to couple membrane receptors to intracellular signaling pathways. Acts as a mediator of cell spreading and actin cytoskeleton rearrangement. Core component of the CTLH E3 ubiquitin-protein ligase complex that selectively accepts ubiquitin from UBE2H and mediates ubiquitination and subsequent proteasomal degradation of the transcription factor HBP1. May be involved in signaling of ITGB2/LFA-1 and other integrins. Enhances HGF-MET signaling by recruiting Sos and activating the Ras pathway. Enhances dihydrotestosterone-induced transactivation activity of AR, as well as dexamethasone-induced transactivation activity of NR3C1, but not affect estrogen-induced transactivation. Stabilizes TP73 isoform Alpha, probably by inhibiting its ubiquitination, and increases its proapoptotic activity. Inhibits the kinase activity of DYRK1A and DYRK1B. Inhibits FMR1 binding to RNA. The protein is Ran-binding protein 9 of Mus musculus (Mouse).